Reading from the N-terminus, the 406-residue chain is Inactive serine protease 35 (406 aa).

The first 17 residues, 1–17 (MLLWLIIFVSGWTLSLG), serve as a signal peptide directing secretion. The N-linked (GlcNAc...) asparagine glycan is linked to Asn-87. Residues 121-401 (VYGTDSRFSI…ICLWIHGNAA (281 aa)) form the Peptidase S1 domain. The cysteines at positions 151 and 167 are disulfide-linked. Residues 186–204 (LKMRNKGGRKKRRGSRRSR) show a composition bias toward basic residues. Residues 186-248 (LKMRNKGGRK…RPSFQWTRVK (63 aa)) are disordered.

This sequence belongs to the peptidase S1 family.

The protein localises to the secreted. The protein is Inactive serine protease 35 (Prss35) of Rattus norvegicus (Rat).